Here is an 813-residue protein sequence, read N- to C-terminus: Acyl-homoserine lactone acylase QuiP (813 aa).

Residues 1–26 (MAAPAFPPFRLRFATAATLLGMLGLA) form the signal peptide. Serine 262 (nucleophile) is an active-site residue.

This sequence belongs to the peptidase S45 family. As to quaternary structure, heterodimer of an alpha subunit and a beta subunit processed from the same precursor.

It is found in the periplasm. It carries out the reaction an N-acyl-L-homoserine lactone + H2O = L-homoserine lactone + a carboxylate. Functionally, catalyzes the deacylation of acyl-homoserine lactone (AHL or acyl-HSL), releasing homoserine lactone (HSL) and the corresponding fatty acid. Possesses a specificity for the degradation of long-chain acyl-HSLs (side chains of seven or more carbons in length). The sequence is that of Acyl-homoserine lactone acylase QuiP (quiP) from Pseudomonas putida (strain ATCC 47054 / DSM 6125 / CFBP 8728 / NCIMB 11950 / KT2440).